A 63-amino-acid polypeptide reads, in one-letter code: Cypmaclein (63 aa).

Belongs to the GASA family. Expressed in pollen (at protein level).

The protein is Cypmaclein of Cryptomeria japonica (Japanese cedar).